A 67-amino-acid chain; its full sequence is Large ribosomal subunit protein bL31 (67 aa).

4 residues coordinate Zn(2+): cysteine 16, cysteine 18, cysteine 37, and cysteine 40.

This sequence belongs to the bacterial ribosomal protein bL31 family. Type A subfamily. As to quaternary structure, part of the 50S ribosomal subunit. Zn(2+) is required as a cofactor.

Binds the 23S rRNA. This Methylococcus capsulatus (strain ATCC 33009 / NCIMB 11132 / Bath) protein is Large ribosomal subunit protein bL31.